The sequence spans 345 residues: N-acetyl-gamma-glutamyl-phosphate reductase (345 aa).

Cys-149 is a catalytic residue.

The protein belongs to the NAGSA dehydrogenase family. Type 1 subfamily.

It localises to the cytoplasm. The enzyme catalyses N-acetyl-L-glutamate 5-semialdehyde + phosphate + NADP(+) = N-acetyl-L-glutamyl 5-phosphate + NADPH + H(+). Its pathway is amino-acid biosynthesis; L-arginine biosynthesis; N(2)-acetyl-L-ornithine from L-glutamate: step 3/4. Its function is as follows. Catalyzes the NADPH-dependent reduction of N-acetyl-5-glutamyl phosphate to yield N-acetyl-L-glutamate 5-semialdehyde. In Bacillus subtilis (strain 168), this protein is N-acetyl-gamma-glutamyl-phosphate reductase.